A 63-amino-acid polypeptide reads, in one-letter code: Large ribosomal subunit protein bL35 (63 aa).

It belongs to the bacterial ribosomal protein bL35 family.

This is Large ribosomal subunit protein bL35 from Campylobacter jejuni (strain RM1221).